Reading from the N-terminus, the 447-residue chain is GTPase Der (447 aa).

EngA-type G domains are found at residues 4 to 165 and 180 to 357; these read QIIT…PEEE and LQIV…KIWN. Residues 10-17, 57-61, 119-122, 186-193, 233-237, and 298-301 contribute to the GTP site; these read GRPNVGKS, DTPGL, NKCE, GRPNAGKS, DTAGL, and NKWD. The region spanning 358-443 is the KH-like domain; it reads KKITTSKLNE…PIRFIYVKTK (86 aa).

The protein belongs to the TRAFAC class TrmE-Era-EngA-EngB-Septin-like GTPase superfamily. EngA (Der) GTPase family. As to quaternary structure, associates with the 50S ribosomal subunit.

Functionally, GTPase that plays an essential role in the late steps of ribosome biogenesis. The protein is GTPase Der of Rickettsia peacockii (strain Rustic).